A 335-amino-acid polypeptide reads, in one-letter code: Polyprenol dehydrogenase (335 aa).

4 residues coordinate NAD(+): Ile-55, Tyr-208, Lys-212, and Thr-245. The active-site Proton acceptor is the Tyr-208.

Belongs to the short-chain dehydrogenases/reductases (SDR) family.

The protein resides in the lipid droplet. It is found in the secreted. It catalyses the reaction a di-trans,poly-cis-polyprenol + NAD(+) = a di-trans,poly-cis-polyprenal + NADH + H(+). The catalysed reaction is a di-trans,poly-cis-polyprenol + NADP(+) = a di-trans,poly-cis-polyprenal + NADPH + H(+). It carries out the reaction a di-trans,poly-cis-dolichol + NADP(+) = a di-trans,poly-cis-dolichal + NADPH + H(+). The enzyme catalyses a di-trans,poly-cis-dolichol + NAD(+) = a di-trans,poly-cis-dolichal + NADH + H(+). The protein operates within protein modification; protein glycosylation. In terms of biological role, oxidoreductase that plays a key role in early steps of protein N-linked glycosylation by mediating two non-consecutive steps in dolichol biosynthesis. Acts both as a NAD(+)-dependent dehydrogenase and as a NADPH-dependent reductase during the conversion of polyprenol into dolichol. First catalyzes the NAD(+)-dependent dehydrogenation of polyprenol into polyprenal; polyprenal is then reduced into dolichal by SRD5A3. It then catalyzes the NADPH-dependent reduction of dolichal into dolichol. May also acts as a positive regulator of starvation-induced autophagy. This chain is Polyprenol dehydrogenase (Dhrsx), found in Mus musculus (Mouse).